The primary structure comprises 438 residues: uncharacterized protein (438 aa).

His59 lines the Zn(2+) pocket. The Proton acceptor role is filled by Glu62. Zn(2+)-binding residues include His63 and Glu139.

The protein belongs to the peptidase M16 family. Zn(2+) serves as cofactor.

This is an uncharacterized protein from Mycobacterium tuberculosis (strain CDC 1551 / Oshkosh).